Reading from the N-terminus, the 397-residue chain is MVADLTSDISESQEQETETNSANNNGAVFRPENCPRLVIKIGSSLLVDQRGQVRRDWLQTVAYDIAKLHQAGQQIIVVSSGAIALGARRLNLPRGGRASLEDAQASASVGQILLSQCWAELLGACSLDSSQILLTLDDLEDRRRYLNVSATLDRLLSLGVVPVINENDSIATAEIRFGDNDRLAARIGQASHASGVILFSDVDGLYTANPMKDPNAKRIDRVEHIDNSTEAMASSDSASGMGSGGMASKVEAARIATYSGVNLAITTGKRPSPLTMFLDDGAGTLFTADESASAHKTWLAGRLTAHGQVYIDQGAVEALHDGNSLLPAGVCSIEGKFNRGDVVDILDQEHNLIARGLIEYDSEDSAQITGKRSQEIADILGYEARTALIHRNHMVML.

The interval 1 to 28 (MVADLTSDISESQEQETETNSANNNGAV) is disordered. ATP is bound at residue Lys-40. Residues Ser-80, Asp-168, and Asn-180 each coordinate substrate. Residues 200–201 (SD) and 243–249 (SGGMASK) contribute to the ATP site. The PUA domain occupies 306–383 (HGQVYIDQGA…QEIADILGYE (78 aa)).

Belongs to the glutamate 5-kinase family.

It is found in the cytoplasm. It catalyses the reaction L-glutamate + ATP = L-glutamyl 5-phosphate + ADP. It participates in amino-acid biosynthesis; L-proline biosynthesis; L-glutamate 5-semialdehyde from L-glutamate: step 1/2. Its function is as follows. Catalyzes the transfer of a phosphate group to glutamate to form L-glutamate 5-phosphate. The protein is Glutamate 5-kinase of Zymomonas mobilis subsp. mobilis (strain ATCC 31821 / ZM4 / CP4).